The primary structure comprises 83 residues: uncharacterized protein (83 aa).

A helical membrane pass occupies residues 50–70; it reads IMVFLGEAWIILIPFAIFCII.

The protein belongs to the plectrovirus ORF7 family.

The protein resides in the host membrane. This is an uncharacterized protein from Spiroplasma citri (SpV1).